Reading from the N-terminus, the 94-residue chain is MFTINAEVRKEQGKGASRRLRAANKFPAIIYGGKEAPLAIELDHDKVMNMQAKAEFYSEVLTIVVDGKEIKVKAQDVQRHPYKPKLQHIDFVRA.

Belongs to the bacterial ribosomal protein bL25 family. In terms of assembly, part of the 50S ribosomal subunit; part of the 5S rRNA/L5/L18/L25 subcomplex. Contacts the 5S rRNA. Binds to the 5S rRNA independently of L5 and L18.

Functionally, this is one of the proteins that binds to the 5S RNA in the ribosome where it forms part of the central protuberance. The chain is Large ribosomal subunit protein bL25 from Escherichia coli (strain K12 / DH10B).